Reading from the N-terminus, the 361-residue chain is MTAPVTAPTTMPAQTPPTVETDVVTEAPRPLDDDILARARRQVLDEGRGLDEQDVLAVLQLPDEALGDLLALAHEVRLRWCGPEVEVEGIISLKTGGCPEDCHFCSQSGRFDSPVRSAWLDVPSLVEAAKATAATGATEFCIVAAVRGPDQRLMAQIREGVAAIREAVDINVACSLGMLTQEQVDELAGLGVHRYNHNLETARSHFPKVVTTHSWEERWETCELVRAAGMELCCGAIIGVGESLEQRAELAAQLAALEPDEVPLNFLNPRPGTPFGDLPAVDSREALRTIAAFRLALPRTILRYAGGREITLGDLDVQGMLGGINAVIVGNYLTTLGKNPESDLAMLTELRMPIKSLQATL.

The Radical SAM core domain occupies 83–308; the sequence is PEVEVEGIIS…RTILRYAGGR (226 aa). Residues Cys-98, Cys-102, and Cys-105 each contribute to the [4Fe-4S] cluster site. Positions 141, 174, 233, and 303 each coordinate [2Fe-2S] cluster.

Belongs to the radical SAM superfamily. Biotin synthase family. In terms of assembly, homodimer. It depends on [4Fe-4S] cluster as a cofactor. [2Fe-2S] cluster serves as cofactor.

The catalysed reaction is (4R,5S)-dethiobiotin + (sulfur carrier)-SH + 2 reduced [2Fe-2S]-[ferredoxin] + 2 S-adenosyl-L-methionine = (sulfur carrier)-H + biotin + 2 5'-deoxyadenosine + 2 L-methionine + 2 oxidized [2Fe-2S]-[ferredoxin]. Its pathway is cofactor biosynthesis; biotin biosynthesis; biotin from 7,8-diaminononanoate: step 2/2. Catalyzes the conversion of dethiobiotin (DTB) to biotin by the insertion of a sulfur atom into dethiobiotin via a radical-based mechanism. The chain is Biotin synthase from Parafrankia sp. (strain EAN1pec).